Here is a 428-residue protein sequence, read N- to C-terminus: Glutamyl-tRNA reductase (428 aa).

Substrate is bound by residues Thr-49–Arg-52, Ser-109, Glu-114–Gln-116, and Gln-120. Cys-50 functions as the Nucleophile in the catalytic mechanism. Gly-189–Ser-194 contributes to the NADP(+) binding site.

The protein belongs to the glutamyl-tRNA reductase family. As to quaternary structure, homodimer.

It carries out the reaction (S)-4-amino-5-oxopentanoate + tRNA(Glu) + NADP(+) = L-glutamyl-tRNA(Glu) + NADPH + H(+). It functions in the pathway porphyrin-containing compound metabolism; protoporphyrin-IX biosynthesis; 5-aminolevulinate from L-glutamyl-tRNA(Glu): step 1/2. Its pathway is porphyrin-containing compound metabolism; chlorophyll biosynthesis. In terms of biological role, catalyzes the NADPH-dependent reduction of glutamyl-tRNA(Glu) to glutamate 1-semialdehyde (GSA). The sequence is that of Glutamyl-tRNA reductase from Gloeothece citriformis (strain PCC 7424) (Cyanothece sp. (strain PCC 7424)).